The sequence spans 318 residues: MRAKPSDAKLTGLFLDMLAAEQGAGPNTLDAYRRDLTDFSEFLGRVGHSFADAETQTLRDYLADLDTRGFKSTSVARRLSAMRHLYRFLLNERIRGDDPAAILSGPKRGRGLPKVLSIADVDRMLRRARELSEAEDASPSKRLRALRLYCLLEVLYATGLRVSELVALPRTAAKRDARMIVVRGKGNKERLVPLNEASRQAMADYLAATEAAKSDKKTGVAASKWLFPSFGESGHLTRQHFARDLKELAVASGLQARLVSPHVLRHAFASHLLHNGADLRIVQTLLGHTDISTTQIYTHVVEERLKSLVRDLHPLAEK.

The Core-binding (CB) domain occupies P5–L90. Residues G111–R310 enclose the Tyr recombinase domain. Residues R161, K185, H262, R265, and H288 contribute to the active site. Y297 serves as the catalytic O-(3'-phospho-DNA)-tyrosine intermediate.

Belongs to the 'phage' integrase family. XerD subfamily. Forms a cyclic heterotetrameric complex composed of two molecules of XerC and two molecules of XerD.

The protein resides in the cytoplasm. Functionally, site-specific tyrosine recombinase, which acts by catalyzing the cutting and rejoining of the recombining DNA molecules. The XerC-XerD complex is essential to convert dimers of the bacterial chromosome into monomers to permit their segregation at cell division. It also contributes to the segregational stability of plasmids. The sequence is that of Tyrosine recombinase XerD from Bradyrhizobium diazoefficiens (strain JCM 10833 / BCRC 13528 / IAM 13628 / NBRC 14792 / USDA 110).